Here is a 218-residue protein sequence, read N- to C-terminus: Small ribosomal subunit protein uS3c (218 aa).

Residues isoleucine 43–alanine 118 enclose the KH type-2 domain.

Belongs to the universal ribosomal protein uS3 family. Part of the 30S ribosomal subunit.

The protein localises to the plastid. It is found in the chloroplast. This Coffea arabica (Arabian coffee) protein is Small ribosomal subunit protein uS3c (rps3).